Here is a 464-residue protein sequence, read N- to C-terminus: ATP synthase subunit beta (464 aa).

148-155 (GGAGVGKT) contributes to the ATP binding site.

This sequence belongs to the ATPase alpha/beta chains family. As to quaternary structure, F-type ATPases have 2 components, CF(1) - the catalytic core - and CF(0) - the membrane proton channel. CF(1) has five subunits: alpha(3), beta(3), gamma(1), delta(1), epsilon(1). CF(0) has three main subunits: a(1), b(2) and c(9-12). The alpha and beta chains form an alternating ring which encloses part of the gamma chain. CF(1) is attached to CF(0) by a central stalk formed by the gamma and epsilon chains, while a peripheral stalk is formed by the delta and b chains.

The protein resides in the cell inner membrane. The catalysed reaction is ATP + H2O + 4 H(+)(in) = ADP + phosphate + 5 H(+)(out). Its function is as follows. Produces ATP from ADP in the presence of a proton gradient across the membrane. The catalytic sites are hosted primarily by the beta subunits. The protein is ATP synthase subunit beta of Marinobacter nauticus (strain ATCC 700491 / DSM 11845 / VT8) (Marinobacter aquaeolei).